We begin with the raw amino-acid sequence, 344 residues long: MQEELKRLEKEAVEKVEAAGSLKEVNDVRVAYLGKKGPITEVLRGMGKLSAEERPKMGALANEVREKIAAAIAEKNARLEEEEVKRKLKEQTIDVTLPGSPVKTGARHPLTIVIEEIEDLFISMGYSVEEGPEVETDYYNFEALNLPKEHPARDMQDSFYITEDTLMRTQTSPVQTRTMEKHKGKGPVKIICPGKVYRRDNDDATHSHQFMQIEGLCVDRDISMSDLKGTLETVAKKMFGEEREIRLRPSFFPFTEPSVEVDVSCFKCGGKGCSVCKQTGWIEILGAGMVHPNVLEMAGFDSKQYQGFAFGMGVERIAMLKYGIDDIRHFYTNDVRFLSQFKQA.

Glu-256 contacts Mg(2+).

The protein belongs to the class-II aminoacyl-tRNA synthetase family. Phe-tRNA synthetase alpha subunit type 1 subfamily. In terms of assembly, tetramer of two alpha and two beta subunits. Mg(2+) serves as cofactor.

The protein localises to the cytoplasm. It carries out the reaction tRNA(Phe) + L-phenylalanine + ATP = L-phenylalanyl-tRNA(Phe) + AMP + diphosphate + H(+). The sequence is that of Phenylalanine--tRNA ligase alpha subunit from Bacillus licheniformis (strain ATCC 14580 / DSM 13 / JCM 2505 / CCUG 7422 / NBRC 12200 / NCIMB 9375 / NCTC 10341 / NRRL NRS-1264 / Gibson 46).